Reading from the N-terminus, the 469-residue chain is Protein RUFY3 (469 aa).

Threonine 5 and threonine 12 each carry phosphothreonine. Serine 34 and serine 49 each carry phosphoserine. Threonine 51 is subject to Phosphothreonine. In terms of domain architecture, RUN spans 95 to 227 (DSDYAPLQQF…IDANFCMKGE (133 aa)). Coiled coils occupy residues 271 to 362 (NRHL…VEKE) and 422 to 463 (KSEL…AANK).

In terms of assembly, interacts with PAK1. Interacts (via C-terminus) with Ras-related Rab-5 proteins. Interacts (via C-terminus) with Ras-related Rap-2 proteins. Interacts with PIK3CA and PIK3R1. Interacts (via N-terminus) with FSCN1; this interaction induces neuron axon development. Interacts with DBN1. Interacts (via the second coiled coil) with GTP-, but not GDP-bound ARL8A and ARL8B. Interacts with dynactin/DCTN1 and the dynein intermediate chain DYNC1I1/2. Directly interacts with DYNC1LI1. Phosphorylated by PAK1.

Its subcellular location is the cytoplasm. It localises to the endomembrane system. The protein localises to the cell projection. It is found in the invadopodium. The protein resides in the growth cone. Its subcellular location is the perikaryon. It localises to the filopodium. The protein localises to the lamellipodium. It is found in the lysosome. Its function is as follows. ARL8 effector that promotes the coupling of endolysosomes to dynein-dynactin for retrograde transport along microtubules. Acts by binding both GTP-bound ARL8 and dynein-dynactin. In nonneuronal cells, promotes concentration of endolysosomes in the juxtanuclear area. In hippocampal neurons, drives retrograde transport of endolysosomes from the axon to the soma. Plays a role in the generation of neuronal polarity formation and axon growth. Implicated in the formation of a single axon by developing neurons. May inhibit the formation of additional axons by inhibition of PI3K in minor neuronal processes. Plays a role in the formation of F-actin-enriched protrusive structures at the cell periphery. Plays a role in cytoskeletal organization by regulating the subcellular localization of FSCN1 and DBN1 at axonal growth cones. This is Protein RUFY3 from Pongo abelii (Sumatran orangutan).